A 23-amino-acid chain; its full sequence is Alpha-conotoxin-like RgIB (23 aa).

2 disulfide bridges follow: cysteine 5–cysteine 11 and cysteine 6–cysteine 19. The lacks the Ser-Xaa-Pro motif that is crucial for potent interaction with nAChR stretch occupies residues 7-9 (KNP).

Expressed by venom duct.

It localises to the secreted. Alpha-conotoxins act on postsynaptic membranes, they bind to the nicotinic acetylcholine receptors (nAChR) and thus inhibit them. Is a specific blocker of the alpha-3-beta-4/CHRNA3-CHRNB4 image nAChR and may also block alpha-3-beta-4-alpha-5 (CHRNA3-CHRNB4-CHRNA5) channels. Has possibly a distinct nAChR binding mode from other alpha-conotoxins, due to a different three residue motif (lacks the Ser-Xaa-Pro motif). In vivo, causes hyperactivity and behavioral disorders in mice following intracranial injection. The sequence is that of Alpha-conotoxin-like RgIB from Conus regius (Crown cone).